The chain runs to 261 residues: Kallikrein-1 (261 aa).

The signal sequence occupies residues 1 to 18 (MWFLILFLALSLGRNDAA). Positions 19–24 (PPVQSR) are cleaved as a propeptide — activation peptide. A Peptidase S1 domain is found at 25-258 (VVGGYNCEMN…FTPWIKEVMK (234 aa)). 5 cysteine pairs are disulfide-bonded: cysteine 31–cysteine 173, cysteine 50–cysteine 66, cysteine 152–cysteine 219, cysteine 184–cysteine 198, and cysteine 209–cysteine 234. Catalysis depends on histidine 65, which acts as the Charge relay system. Asparagine 108 carries an N-linked (GlcNAc...) asparagine glycan. Aspartate 120 acts as the Charge relay system in catalysis. The active-site Charge relay system is serine 213.

It belongs to the peptidase S1 family. Kallikrein subfamily. In terms of tissue distribution, high levels in pancreas, submaxillary and parotid glands, spleen, and kidney.

The catalysed reaction is Preferential cleavage of Arg-|-Xaa bonds in small molecule substrates. Highly selective action to release kallidin (lysyl-bradykinin) from kininogen involves hydrolysis of Met-|-Xaa or Leu-|-Xaa.. The polypeptide is Kallikrein-1 (Ngfg) (Rattus norvegicus (Rat)).